The following is a 620-amino-acid chain: Dihydroxy-acid dehydratase (620 aa).

D81 is a binding site for Mg(2+). Residue C122 coordinates [2Fe-2S] cluster. Residues D123 and K124 each coordinate Mg(2+). K124 carries the N6-carboxylysine modification. [2Fe-2S] cluster is bound at residue C195. E491 serves as a coordination point for Mg(2+). S517 functions as the Proton acceptor in the catalytic mechanism.

This sequence belongs to the IlvD/Edd family. As to quaternary structure, homodimer. It depends on [2Fe-2S] cluster as a cofactor. Mg(2+) serves as cofactor.

It catalyses the reaction (2R)-2,3-dihydroxy-3-methylbutanoate = 3-methyl-2-oxobutanoate + H2O. The catalysed reaction is (2R,3R)-2,3-dihydroxy-3-methylpentanoate = (S)-3-methyl-2-oxopentanoate + H2O. The protein operates within amino-acid biosynthesis; L-isoleucine biosynthesis; L-isoleucine from 2-oxobutanoate: step 3/4. Its pathway is amino-acid biosynthesis; L-valine biosynthesis; L-valine from pyruvate: step 3/4. Functions in the biosynthesis of branched-chain amino acids. Catalyzes the dehydration of (2R,3R)-2,3-dihydroxy-3-methylpentanoate (2,3-dihydroxy-3-methylvalerate) into 2-oxo-3-methylpentanoate (2-oxo-3-methylvalerate) and of (2R)-2,3-dihydroxy-3-methylbutanoate (2,3-dihydroxyisovalerate) into 2-oxo-3-methylbutanoate (2-oxoisovalerate), the penultimate precursor to L-isoleucine and L-valine, respectively. This Colwellia psychrerythraea (strain 34H / ATCC BAA-681) (Vibrio psychroerythus) protein is Dihydroxy-acid dehydratase.